We begin with the raw amino-acid sequence, 344 residues long: Eukaryotic translation initiation factor 2 subunit alpha homolog (344 aa).

In terms of domain architecture, S1 motif spans 21–92 (DMAVMIQVKN…EKGYIDLSKR (72 aa)). Serine 56 carries the phosphoserine; by GCN2 modification. The interval 312-344 (DNEEMSGDEDSGDEEEDTGMGEVDLDAGAGIIE) is disordered. Acidic residues predominate over residues 314 to 336 (EEMSGDEDSGDEEEDTGMGEVDL).

This sequence belongs to the eIF-2-alpha family. In terms of assembly, heterotrimer composed of an alpha, a beta and a gamma chain. Post-translationally, phosphorylated at Ser-56 by GCN2.

Functions in the early steps of protein synthesis by forming a ternary complex with GTP and initiator tRNA. This complex binds to a 40S ribosomal subunit, followed by mRNA binding to form a 43S pre-initiation complex. Junction of the 60S ribosomal subunit to form the 80S initiation complex is preceded by hydrolysis of the GTP bound to eIF-2 and release of an eIF-2-GDP binary complex. In order for eIF-2 to recycle and catalyze another round of initiation, the GDP bound to eIF-2 must exchange with GTP by way of a reaction catalyzed by eIF-2B. This chain is Eukaryotic translation initiation factor 2 subunit alpha homolog, found in Arabidopsis thaliana (Mouse-ear cress).